We begin with the raw amino-acid sequence, 314 residues long: Methionyl-tRNA formyltransferase (314 aa).

111-114 (SLLP) contacts (6S)-5,6,7,8-tetrahydrofolate.

The protein belongs to the Fmt family.

The catalysed reaction is L-methionyl-tRNA(fMet) + (6R)-10-formyltetrahydrofolate = N-formyl-L-methionyl-tRNA(fMet) + (6S)-5,6,7,8-tetrahydrofolate + H(+). Attaches a formyl group to the free amino group of methionyl-tRNA(fMet). The formyl group appears to play a dual role in the initiator identity of N-formylmethionyl-tRNA by promoting its recognition by IF2 and preventing the misappropriation of this tRNA by the elongation apparatus. In Chlorobium luteolum (strain DSM 273 / BCRC 81028 / 2530) (Pelodictyon luteolum), this protein is Methionyl-tRNA formyltransferase.